A 299-amino-acid chain; its full sequence is UDP-N-acetylenolpyruvoylglucosamine reductase (299 aa).

The FAD-binding PCMH-type domain occupies 19-192; sequence LGGQALAEVR…AAVTLQLRRS (174 aa). The active site involves Arg-169. Catalysis depends on Cys-221, which acts as the Proton donor. Glu-292 is an active-site residue.

Belongs to the MurB family. The cofactor is FAD.

It is found in the cytoplasm. It catalyses the reaction UDP-N-acetyl-alpha-D-muramate + NADP(+) = UDP-N-acetyl-3-O-(1-carboxyvinyl)-alpha-D-glucosamine + NADPH + H(+). It functions in the pathway cell wall biogenesis; peptidoglycan biosynthesis. In terms of biological role, cell wall formation. In Oleidesulfovibrio alaskensis (strain ATCC BAA-1058 / DSM 17464 / G20) (Desulfovibrio alaskensis), this protein is UDP-N-acetylenolpyruvoylglucosamine reductase.